Consider the following 192-residue polypeptide: Thymidine kinase (192 aa).

ATP is bound by residues 9–16 and 87–90; these read SAMNAGKS and DECQ. The Proton acceptor role is filled by Glu-88. Zn(2+)-binding residues include Cys-145, Cys-147, Cys-182, and His-185.

The protein belongs to the thymidine kinase family. As to quaternary structure, homotetramer.

It is found in the cytoplasm. It carries out the reaction thymidine + ATP = dTMP + ADP + H(+). This is Thymidine kinase from Aliivibrio fischeri (strain ATCC 700601 / ES114) (Vibrio fischeri).